A 387-amino-acid chain; its full sequence is Alkanesulfonate monooxygenase (387 aa).

Belongs to the SsuD family.

It carries out the reaction an alkanesulfonate + FMNH2 + O2 = an aldehyde + FMN + sulfite + H2O + 2 H(+). Functionally, catalyzes the desulfonation of aliphatic sulfonates. This chain is Alkanesulfonate monooxygenase, found in Ralstonia nicotianae (strain ATCC BAA-1114 / GMI1000) (Ralstonia solanacearum).